Consider the following 360-residue polypeptide: MKSSIVAKLEALYERHEEVQALLGDAATIADQDKFRALSREYAQLSDVARCYTDWRQVQEDIETAQMMLDDPEMREMAQEELRDAKEKGDQLEQQLQVLLLPKDPDDERNAFVEVRAGTGGDEAALFAGDLFRMYSRYAESRRWQVEILSANEGEHGGFKEVIAKFSGDGVYGRLKFESGGHRVQRVPATESQGRIHTSACTVAVMPELPEAEMPDINPADLRIDTFRSSGAGGQHVNTTDSAIRITHLPTGIVVECQDERSQHKNKAKALSVLGARIRAAEVAKRQQAEASTRRNLLGSGDRSDRNRTYNFPQGRVTDHRINLTLYRLDETMEGKLDMLIEPIVQEYQADQLAALSEQE.

At glutamine 235 the chain carries N5-methylglutamine. The disordered stretch occupies residues 285–313; that stretch reads KRQQAEASTRRNLLGSGDRSDRNRTYNFP.

It belongs to the prokaryotic/mitochondrial release factor family. Post-translationally, methylated by PrmC. Methylation increases the termination efficiency of RF1.

The protein resides in the cytoplasm. Its function is as follows. Peptide chain release factor 1 directs the termination of translation in response to the peptide chain termination codons UAG and UAA. The protein is Peptide chain release factor 1 of Klebsiella pneumoniae (strain 342).